We begin with the raw amino-acid sequence, 25 residues long: Chrysophsin-2 (25 aa).

Residue H25 is modified to Histidine amide.

Gill.

It localises to the secreted. Has antibacterial activity against Gram-positive bacteria B.subtilis ATCC 6633, L.garvieae ATCC 49156 and S.iniae F-8502, and Gram-negative bacteria E.coli WT-2, V.anguillarum ATCC 19264, V.penaeicida KHA, V.harveyi ATCC 14126, V.vulnificus ATCC 33148 and A.salmonicida NCMB 1102. Has hemolytic activity against human red blood cells. Seems to disrupt the membranes by adopting an alpha helical conformation. May play a significant role in innate host defense. This Pagrus major (Red sea bream) protein is Chrysophsin-2.